Reading from the N-terminus, the 288-residue chain is Diaminopimelate epimerase (288 aa).

The substrate site is built by Asn14 and Asn67. The active-site Proton donor is the Cys76. Residues 77 to 78, Asn166, Asn199, and 217 to 218 each bind substrate; these read GN and ER. Residue Cys226 is the Proton acceptor of the active site. A substrate-binding site is contributed by 227 to 228; that stretch reads GT.

Belongs to the diaminopimelate epimerase family. As to quaternary structure, homodimer.

The protein resides in the cytoplasm. The catalysed reaction is (2S,6S)-2,6-diaminopimelate = meso-2,6-diaminopimelate. It participates in amino-acid biosynthesis; L-lysine biosynthesis via DAP pathway; DL-2,6-diaminopimelate from LL-2,6-diaminopimelate: step 1/1. Catalyzes the stereoinversion of LL-2,6-diaminopimelate (L,L-DAP) to meso-diaminopimelate (meso-DAP), a precursor of L-lysine and an essential component of the bacterial peptidoglycan. This is Diaminopimelate epimerase from Bacillus cytotoxicus (strain DSM 22905 / CIP 110041 / 391-98 / NVH 391-98).